Consider the following 471-residue polypeptide: Coagulation factor IX (471 aa).

Residues 1 to 19 (MAKIPLILSFCLLEAFLGA) form the signal peptide. A propeptide spanning residues 20–39 (ESTVFIENKEASTVLSRTRR) is cleaved from the precursor. The Gla domain occupies 40–85 (GNSNRLEELIPGNLERECIEEKCSFEEAREVFENTEKTMEFWKIYI). 10 residues coordinate Ca(2+): asparagine 41, glutamate 46, glutamate 47, glutamate 54, glutamate 56, glutamate 59, glutamate 60, glutamate 65, glutamate 66, and glutamate 69. 4-carboxyglutamate occurs at positions 46, 47, 54, 56, 59, 60, 65, 66, 69, 72, 75, and 79. Residue glutamate 54 coordinates Mg(2+). A disulfide bridge links cysteine 57 with cysteine 62. Glutamate 59 is a binding site for Mg(2+). A Mg(2+)-binding site is contributed by glutamate 65. Mg(2+) is bound at residue glutamate 69. 5 residues coordinate Ca(2+): glutamate 75, glutamate 79, aspartate 86, glycine 87, and glutamine 89. Mg(2+) contacts are provided by glutamate 75 and glutamate 79. In terms of domain architecture, EGF-like 1; calcium-binding spans 86–122 (DGDQCNSNPCKNGAVCKDGVSSYECMCPPGYGGRNCE). Cystine bridges form between cysteine 90–cysteine 101, cysteine 95–cysteine 110, cysteine 112–cysteine 121, cysteine 127–cysteine 138, cysteine 134–cysteine 148, cysteine 150–cysteine 163, cysteine 171–cysteine 345, cysteine 262–cysteine 278, cysteine 392–cysteine 406, and cysteine 417–cysteine 445. Serine 92 is a glycosylation site (O-linked (Glc...) serine). A Ca(2+)-binding site is contributed by aspartate 103. Position 103 is a (3R)-3-hydroxyaspartate (aspartate 103). Serine 107 carries the post-translational modification Phosphoserine. The EGF-like 2 domain occupies 123–164 (IDSTCATKNGGCEHFCRHDTPQKAVCSCASGYKLHEDGKSCK). Residues 186–235 (TENTIERWNITAHDEGDAHDEALDITEPPPPPTTSAAPAKIVPITKNDTR) constitute a propeptide, activation peptide. One can recognise a Peptidase S1 domain in the interval 236–469 (VVGGYDSVKG…YVKWIRETTR (234 aa)). Histidine 277 (charge relay system) is an active-site residue. Ca(2+)-binding residues include glutamate 291, asparagine 293, glutamate 296, and glutamate 301. Aspartate 325 functions as the Charge relay system in the catalytic mechanism. Serine 421 serves as the catalytic Charge relay system.

The protein belongs to the peptidase S1 family. In terms of assembly, heterodimer of a light chain and a heavy chain; disulfide-linked. Activated by factor XIa, which excises the activation peptide. The propeptide can also be removed by snake venom protease. Activated by coagulation factor VIIa-tissue factor (F7-F3) complex in calcium-dependent manner. Post-translationally, the iron and 2-oxoglutarate dependent 3-hydroxylation of aspartate and asparagine is (R) stereospecific within EGF domains.

It localises to the secreted. It catalyses the reaction Selective cleavage of Arg-|-Ile bond in factor X to form factor Xa.. In terms of biological role, factor IX is a vitamin K-dependent plasma protein that participates in the intrinsic pathway of blood coagulation by converting factor X to its active form in the presence of Ca(2+) ions, phospholipids, and factor VIIIa. This Gallus gallus (Chicken) protein is Coagulation factor IX (F9).